The chain runs to 60 residues: Short neurotoxin 1 (60 aa).

Disulfide bonds link C3–C22, C17–C39, C41–C52, and C53–C58.

It belongs to the three-finger toxin family. Short-chain subfamily. Type I alpha-neurotoxin sub-subfamily. In terms of tissue distribution, expressed by the venom gland.

It localises to the secreted. Functionally, binds to muscle nicotinic acetylcholine receptor (nAChR) and inhibit acetylcholine from binding to the receptor, thereby impairing neuromuscular transmission. This Dendroaspis viridis (Western green mamba) protein is Short neurotoxin 1.